Consider the following 178-residue polypeptide: Cytidylate kinase 2 (178 aa).

Residue 7–15 (GKSGCGNTT) participates in ATP binding.

This sequence belongs to the cytidylate kinase family. Type 2 subfamily.

It localises to the cytoplasm. It catalyses the reaction CMP + ATP = CDP + ADP. The enzyme catalyses dCMP + ATP = dCDP + ADP. In Borreliella afzelii (strain PKo) (Borrelia afzelii), this protein is Cytidylate kinase 2.